The chain runs to 115 residues: U3-lycotoxin-Ls1i (115 aa).

Positions 1–20 are cleaved as a signal peptide; that stretch reads MKFVLLFGVFLVTLFSYSSA. Residues 21 to 44 constitute a propeptide that is removed on maturation; sequence EMLDDFDQADEDELLSLIEKEEAR. Intrachain disulfides connect Cys48–Cys63, Cys55–Cys72, Cys62–Cys87, and Cys74–Cys85.

It belongs to the neurotoxin 19 (CSTX) family. 01 subfamily. Expressed by the venom gland.

The protein localises to the secreted. The chain is U3-lycotoxin-Ls1i from Lycosa singoriensis (Wolf spider).